The primary structure comprises 262 residues: R3H domain-containing protein 4 (262 aa).

Disordered regions lie at residues 1 to 27 (MVALDNSEGGPEATPSGETRLSLPGCL) and 132 to 155 (YLEDESQGKRRRGPGRGEDRRRED). A compositionally biased stretch (basic and acidic residues) spans 146-155 (GRGEDRRRED). The R3H domain occupies 182–245 (METLESWEER…RRQMKVSNRH (64 aa)).

Its subcellular location is the nucleus. This Mus musculus (Mouse) protein is R3H domain-containing protein 4 (R3hdm4).